Consider the following 438-residue polypeptide: Acid phosphatase type 7 (438 aa).

Residues 1–23 form the signal peptide; it reads MSPFLGGWLFFCMLLPFSPGVQG. Fe cation contacts are provided by D141, D170, and Y173. D170 lines the Zn(2+) pocket. N205 lines the Zn(2+) pocket. The N-linked (GlcNAc...) asparagine glycan is linked to N211. 2 residues coordinate Zn(2+): H286 and H333. H335 is a Fe cation binding site. Residues N350 and N404 are each glycosylated (N-linked (GlcNAc...) asparagine).

The protein belongs to the metallophosphoesterase superfamily. Purple acid phosphatase family. The cofactor is Fe cation. It depends on Zn(2+) as a cofactor.

It is found in the secreted. The enzyme catalyses a phosphate monoester + H2O = an alcohol + phosphate. The polypeptide is Acid phosphatase type 7 (Mus musculus (Mouse)).